Consider the following 427-residue polypeptide: 3-phosphoshikimate 1-carboxyvinyltransferase (427 aa).

The 3-phosphoshikimate site is built by Lys22, Ser23, and Arg27. Lys22 is a binding site for phosphoenolpyruvate. The phosphoenolpyruvate site is built by Gly96 and Arg124. 7 residues coordinate 3-phosphoshikimate: Ser169, Ser170, Gln171, Ser197, Asp313, Asn336, and Lys340. Gln171 is a binding site for phosphoenolpyruvate. The Proton acceptor role is filled by Asp313. Phosphoenolpyruvate-binding residues include Arg344, Arg386, and Lys411.

This sequence belongs to the EPSP synthase family. As to quaternary structure, monomer.

The protein resides in the cytoplasm. It carries out the reaction 3-phosphoshikimate + phosphoenolpyruvate = 5-O-(1-carboxyvinyl)-3-phosphoshikimate + phosphate. It participates in metabolic intermediate biosynthesis; chorismate biosynthesis; chorismate from D-erythrose 4-phosphate and phosphoenolpyruvate: step 6/7. Its function is as follows. Catalyzes the transfer of the enolpyruvyl moiety of phosphoenolpyruvate (PEP) to the 5-hydroxyl of shikimate-3-phosphate (S3P) to produce enolpyruvyl shikimate-3-phosphate and inorganic phosphate. The polypeptide is 3-phosphoshikimate 1-carboxyvinyltransferase (Salmonella arizonae (strain ATCC BAA-731 / CDC346-86 / RSK2980)).